Reading from the N-terminus, the 660-residue chain is DNA primase (660 aa).

Residues 40–64 (CPFHKEKTPSFTVSPDKQFYYCFGC) form a CHC2-type zinc finger. A disordered region spans residues 94 to 115 (GMEVPREQGRRDQKPRQPTDSP). The span at 97–110 (VPREQGRRDQKPRQ) shows a compositional bias: basic and acidic residues. Residues 261–343 (DEIIVVEGYM…GRRARFLFLP (83 aa)) enclose the Toprim domain. Mg(2+) is bound by residues glutamate 267, aspartate 311, and aspartate 313. 2 disordered regions span residues 425 to 449 (DPQQVEQLAQQAPATSSMPDYDPGY) and 476 to 519 (QAWK…APVE). Positions 428–442 (QVEQLAQQAPATSSM) are enriched in polar residues. Residues 488–498 (PWSDKPWDKNR) show a composition bias toward basic and acidic residues.

This sequence belongs to the DnaG primase family. As to quaternary structure, monomer. Interacts with DnaB. Zn(2+) serves as cofactor. Requires Mg(2+) as cofactor.

It catalyses the reaction ssDNA + n NTP = ssDNA/pppN(pN)n-1 hybrid + (n-1) diphosphate.. RNA polymerase that catalyzes the synthesis of short RNA molecules used as primers for DNA polymerase during DNA replication. The sequence is that of DNA primase from Pseudomonas putida (strain ATCC 47054 / DSM 6125 / CFBP 8728 / NCIMB 11950 / KT2440).